The primary structure comprises 35 residues: Conotoxin M11.2 (35 aa).

4 disulfide bridges follow: C2-C16, C9-C21, C15-C26, and C20-C33.

Belongs to the conotoxin I1 superfamily. Expressed by the venom duct.

It is found in the secreted. This is Conotoxin M11.2 from Conus magus (Magical cone).